Reading from the N-terminus, the 388-residue chain is Probable RNA-binding protein sce3 (388 aa).

Residues 18–84 (ESFGSTNWAD…GGMGSGYQRD (67 aa)) form a disordered region. Positions 38-50 (DRTTSTYRATPSS) are enriched in polar residues. 3 positions are modified to phosphoserine: Ser49, Ser50, and Ser60. Thr61 bears the Phosphothreonine mark. Residues Ser64, Ser67, and Ser71 each carry the phosphoserine modification. Positions 94–169 (FTAHVGNLSF…RPVRITVAEP (76 aa)) constitute an RRM domain. The span at 171–185 (RSFAREERSTGDWVR) shows a compositional bias: basic and acidic residues. The disordered stretch occupies residues 171 to 388 (RSFAREERST…WTKIGKGRKH (218 aa)). At Ser197 the chain carries Phosphoserine. The span at 208–229 (RFRDPARDPSDRVREEPREWVR) shows a compositional bias: basic and acidic residues. The span at 248–257 (PRSSSNVNTE) shows a compositional bias: polar residues. 3 positions are modified to phosphoserine: Ser250, Ser251, and Ser252. The segment covering 258 to 268 (ATPSATTTTSS) has biased composition (low complexity). A compositionally biased stretch (basic and acidic residues) spans 289-349 (RVEEKLAKRT…LGDGEKKSSE (61 aa)). The residue at position 347 (Ser347) is a Phosphoserine.

The protein resides in the cytoplasm. The chain is Probable RNA-binding protein sce3 (sce3) from Schizosaccharomyces pombe (strain 972 / ATCC 24843) (Fission yeast).